We begin with the raw amino-acid sequence, 122 residues long: Small ribosomal subunit protein uS13 (122 aa).

Residues 98 to 122 (VRGQRTHTNARTRKGPAKAIAGKKK) form a disordered region.

The protein belongs to the universal ribosomal protein uS13 family. Part of the 30S ribosomal subunit. Forms a loose heterodimer with protein S19. Forms two bridges to the 50S subunit in the 70S ribosome.

In terms of biological role, located at the top of the head of the 30S subunit, it contacts several helices of the 16S rRNA. In the 70S ribosome it contacts the 23S rRNA (bridge B1a) and protein L5 of the 50S subunit (bridge B1b), connecting the 2 subunits; these bridges are implicated in subunit movement. Contacts the tRNAs in the A and P-sites. The chain is Small ribosomal subunit protein uS13 from Roseobacter denitrificans (strain ATCC 33942 / OCh 114) (Erythrobacter sp. (strain OCh 114)).